Consider the following 194-residue polypeptide: MPDLQIGRVIKPHGVKGEVVVDPSTDHVPERFAIGEALRAVQTGKERQLTVTGMRRHQNRLLVTFEEIRDRDEAESLRGARFMAAPLHDDSDDGYYDHELIGLRVLNVGSVDADTANRRAYEGEQPEPVDIGEVTGVSHGPAGATLEVAVDADADLPTAGSTILIPFKLAIVPIVDLDNEALVVTPPEGLLELA.

Residues Asp92–Leu190 enclose the PRC barrel domain.

This sequence belongs to the RimM family. Binds ribosomal protein uS19.

It is found in the cytoplasm. An accessory protein needed during the final step in the assembly of 30S ribosomal subunit, possibly for assembly of the head region. Essential for efficient processing of 16S rRNA. May be needed both before and after RbfA during the maturation of 16S rRNA. It has affinity for free ribosomal 30S subunits but not for 70S ribosomes. This Corynebacterium urealyticum (strain ATCC 43042 / DSM 7109) protein is Ribosome maturation factor RimM.